Here is a 360-residue protein sequence, read N- to C-terminus: tRNA N6-adenosine threonylcarbamoyltransferase (360 aa).

Positions 111 and 115 each coordinate Fe cation. Residues 134–138 (LVSGG), D167, G180, D184, and N279 contribute to the substrate site. D307 contributes to the Fe cation binding site.

The protein belongs to the KAE1 / TsaD family. It depends on Fe(2+) as a cofactor.

It localises to the cytoplasm. The enzyme catalyses L-threonylcarbamoyladenylate + adenosine(37) in tRNA = N(6)-L-threonylcarbamoyladenosine(37) in tRNA + AMP + H(+). Functionally, required for the formation of a threonylcarbamoyl group on adenosine at position 37 (t(6)A37) in tRNAs that read codons beginning with adenine. Is involved in the transfer of the threonylcarbamoyl moiety of threonylcarbamoyl-AMP (TC-AMP) to the N6 group of A37, together with TsaE and TsaB. TsaD likely plays a direct catalytic role in this reaction. This is tRNA N6-adenosine threonylcarbamoyltransferase from Acaryochloris marina (strain MBIC 11017).